The chain runs to 546 residues: uncharacterized protein (546 aa).

5 helical membrane-spanning segments follow: residues 4–23, 30–47, 57–79, 91–113, and 155–177; these read ILLE…GYPL, GSSL…AMGS, IVYV…PAFV, ALII…LLGF, and PVVG…ISLV. 2 RCK C-terminal domains span residues 189 to 274 and 275 to 359; these read GKRL…FLGE and VSEE…FFGD. 6 consecutive transmembrane segments (helical) span residues 372 to 394, 399 to 421, 434 to 456, 460 to 482, 489 to 511, and 521 to 543; these read FSLG…GGIT, FAGG…SMVW, IGLV…TTLA, GLAI…LWIG, PMSI…GYAL, and IGYA…ILLT.

The protein belongs to the AAE transporter (TC 2.A.81) family.

It localises to the cell membrane. This is an uncharacterized protein from Geobacter sulfurreducens (strain ATCC 51573 / DSM 12127 / PCA).